The primary structure comprises 176 residues: Nuclear transcription factor Y subunit B-10 (176 aa).

Gly residues predominate over residues 1 to 15 (MAESQTGGGGGGSHE). Positions 1–29 (MAESQTGGGGGGSHESGGDQSPRSLNVRE) are disordered. Position 2 is an N-acetylalanine (A2). A DNA-binding region spans residues 34 to 40 (LPIANIS). A subunit association domain (SAD) region spans residues 61–72 (MQECVSEFISFV). The tract at residues 121 to 176 (GDTKGSGKGGESSAKRDGQPSQVSQFSQVPQQGSFSQGPYGNSQGSNMMVQMPGTE) is disordered. The span at 139–159 (QPSQVSQFSQVPQQGSFSQGP) shows a compositional bias: low complexity. A compositionally biased stretch (polar residues) spans 160-169 (YGNSQGSNMM).

This sequence belongs to the NFYB/HAP3 subunit family. In terms of assembly, heterotrimeric transcription factor composed of three components, NF-YA, NF-YB and NF-YC. NF-YB and NF-YC must interact and dimerize for NF-YA association and DNA binding. In terms of tissue distribution, expressed in the whole plant, except roots.

The protein localises to the nucleus. Its function is as follows. Component of the NF-Y/HAP transcription factor complex. The NF-Y complex stimulates the transcription of various genes by recognizing and binding to a CCAAT motif in promoters. The protein is Nuclear transcription factor Y subunit B-10 (NFYB10) of Arabidopsis thaliana (Mouse-ear cress).